Consider the following 400-residue polypeptide: Serine/threonine transporter SstT (400 aa).

The next 9 helical transmembrane spans lie at 14–34 (IIIA…VTPY), 48–68 (SVAP…FQVG), 76–96 (VLLL…IASL), 136–156 (AISE…GLAM), 177–197 (IIHK…AVTF), 211–231 (LLAV…PILV), 285–305 (IPLG…VLTL), 311–331 (LGIH…TISA), and 349–371 (CSLF…IISV).

Belongs to the dicarboxylate/amino acid:cation symporter (DAACS) (TC 2.A.23) family.

It localises to the cell inner membrane. The enzyme catalyses L-serine(in) + Na(+)(in) = L-serine(out) + Na(+)(out). It carries out the reaction L-threonine(in) + Na(+)(in) = L-threonine(out) + Na(+)(out). Its function is as follows. Involved in the import of serine and threonine into the cell, with the concomitant import of sodium (symport system). In Acinetobacter baumannii (strain ATCC 17978 / DSM 105126 / CIP 53.77 / LMG 1025 / NCDC KC755 / 5377), this protein is Serine/threonine transporter SstT.